A 120-amino-acid polypeptide reads, in one-letter code: UPF0102 protein Daro_0503 (120 aa).

The disordered stretch occupies residues 1 to 20; it reads MQVKANDTTTARGREAEDRA.

The protein belongs to the UPF0102 family.

The chain is UPF0102 protein Daro_0503 from Dechloromonas aromatica (strain RCB).